The primary structure comprises 103 residues: Large ribosomal subunit protein bL21 (103 aa).

The protein belongs to the bacterial ribosomal protein bL21 family. In terms of assembly, part of the 50S ribosomal subunit. Contacts protein L20.

In terms of biological role, this protein binds to 23S rRNA in the presence of protein L20. The sequence is that of Large ribosomal subunit protein bL21 from Pseudomonas paraeruginosa (strain DSM 24068 / PA7) (Pseudomonas aeruginosa (strain PA7)).